The following is a 243-amino-acid chain: Probable transcriptional regulatory protein BDI_1233 (243 aa).

This sequence belongs to the TACO1 family.

The protein resides in the cytoplasm. The protein is Probable transcriptional regulatory protein BDI_1233 of Parabacteroides distasonis (strain ATCC 8503 / DSM 20701 / CIP 104284 / JCM 5825 / NCTC 11152).